The primary structure comprises 117 residues: Protein Wnt-6 (117 aa).

Ser-1 carries the O-palmitoleoyl serine; by PORCN lipid modification. Cysteines 83 and 98 form a disulfide. A glycan (N-linked (GlcNAc...) asparagine) is linked at Asn-84.

This sequence belongs to the Wnt family. Post-translationally, palmitoleoylation is required for efficient binding to frizzled receptors. Depalmitoleoylation leads to Wnt signaling pathway inhibition.

The protein localises to the secreted. It localises to the extracellular space. Its subcellular location is the extracellular matrix. Its function is as follows. Ligand for members of the frizzled family of seven transmembrane receptors. Probable developmental protein. May be a signaling molecule which affects the development of discrete regions of tissues. Is likely to signal over only few cell diameters. In Evasterias troschelii (Mottled sea star), this protein is Protein Wnt-6 (WNT-6).